A 320-amino-acid polypeptide reads, in one-letter code: Cytochrome f (320 aa).

Residues 1–35 form the signal peptide; it reads MENRKTFSWLKEQMIRSISVSIMIYVITRTSISNA. Residues Y36, C56, C59, and H60 each coordinate heme. Residues 286–306 traverse the membrane as a helical segment; sequence VQGLLFFFASVILAQVFLVLK.

The protein belongs to the cytochrome f family. The 4 large subunits of the cytochrome b6-f complex are cytochrome b6, subunit IV (17 kDa polypeptide, petD), cytochrome f and the Rieske protein, while the 4 small subunits are PetG, PetL, PetM and PetN. The complex functions as a dimer. Heme serves as cofactor.

It is found in the plastid. The protein localises to the chloroplast thylakoid membrane. Functionally, component of the cytochrome b6-f complex, which mediates electron transfer between photosystem II (PSII) and photosystem I (PSI), cyclic electron flow around PSI, and state transitions. This chain is Cytochrome f, found in Saccharum hybrid (Sugarcane).